The primary structure comprises 317 residues: Ribose-phosphate pyrophosphokinase (317 aa).

ATP-binding positions include 43 to 45 (DGE) and 102 to 103 (RQ). Positions 106 and 110 each coordinate ADP. His-136 contributes to the Mg(2+) binding site. ADP contacts are provided by residues Gln-141 and 149-150 (DH). Asp-175 is a Mg(2+) binding site. The active site involves Lys-198. D-ribose 5-phosphate is bound by residues Arg-200, Asp-224, and 228–232 (DTAGT). 311-313 (SVS) contacts ADP.

The protein belongs to the ribose-phosphate pyrophosphokinase family. Class I subfamily. In terms of assembly, homohexamer; trimer of dimers. The cofactor is Mg(2+).

It is found in the cytoplasm. It carries out the reaction D-ribose 5-phosphate + ATP = 5-phospho-alpha-D-ribose 1-diphosphate + AMP + H(+). It functions in the pathway metabolic intermediate biosynthesis; 5-phospho-alpha-D-ribose 1-diphosphate biosynthesis; 5-phospho-alpha-D-ribose 1-diphosphate from D-ribose 5-phosphate (route I): step 1/1. Its activity is regulated as follows. Activated by inorganic phosphate, and to a lesser extent by sulfate ions. In addition to form a complex with ATP, Mg(2+) also acts as a cofactor. Strongly inhibited by ADP through competitive binding at the activation site and at a specific allosteric site. Less strongly inhibited by alpha,beta-methylene ATP (mADP), AMP, GDP, GMP and UTP. Its function is as follows. Involved in the biosynthesis of the central metabolite phospho-alpha-D-ribosyl-1-pyrophosphate (PRPP) via the transfer of pyrophosphoryl group from ATP to 1-hydroxyl of ribose-5-phosphate (Rib-5-P). This is Ribose-phosphate pyrophosphokinase from Bacillus subtilis (strain 168).